Consider the following 220-residue polypeptide: Deoxyribose-phosphate aldolase (220 aa).

Asp89 serves as the catalytic Proton donor/acceptor. Catalysis depends on Lys151, which acts as the Schiff-base intermediate with acetaldehyde. Lys180 acts as the Proton donor/acceptor in catalysis.

This sequence belongs to the DeoC/FbaB aldolase family. DeoC type 1 subfamily.

It localises to the cytoplasm. The enzyme catalyses 2-deoxy-D-ribose 5-phosphate = D-glyceraldehyde 3-phosphate + acetaldehyde. It participates in carbohydrate degradation; 2-deoxy-D-ribose 1-phosphate degradation; D-glyceraldehyde 3-phosphate and acetaldehyde from 2-deoxy-alpha-D-ribose 1-phosphate: step 2/2. Its function is as follows. Catalyzes a reversible aldol reaction between acetaldehyde and D-glyceraldehyde 3-phosphate to generate 2-deoxy-D-ribose 5-phosphate. This chain is Deoxyribose-phosphate aldolase, found in Streptococcus suis (strain 05ZYH33).